The following is a 238-amino-acid chain: uncharacterized protein (238 aa).

An HTH gntR-type domain is found at 1–68 (MIYKSIAERL…HGSGTYLVRK (68 aa)). A DNA-binding region (H-T-H motif) is located at residues 28–47 (EKKLAEEFAVSRMTIRKAID).

This is an uncharacterized protein from Escherichia coli (strain K12).